Consider the following 946-residue polypeptide: Probable leucine-rich repeat receptor-like protein kinase At5g49770 (946 aa).

A signal peptide spans 1–25 (MKMSSRIGLFKLLILLFFQIYSVYA). Residues 26–561 (FTDGSDFTAL…LEDSKTVSMK (536 aa)) are Extracellular-facing. LRR repeat units lie at residues 67-91 (DNRVVSISLTNRNLKGKLPTEISTL), 92-116 (SELQTLDLTGNPELSGPLPANIGNL), 118-140 (KLTFLSLMGCAFNGPIPDSIGNL), 141-164 (EQLTRLSLNLNKFSGTIPASMGRL), 166-191 (KLYWFDIADNQLEGKLPVSDGASLPG), 195-219 (LLQTGHFHFGNNKLSGEIPEKLFSS), 221-244 (MTLLHVLFDGNQFTGSIPESLGLV), 245-268 (QNLTVLRLDRNRLSGDIPSSLNNL), 269-293 (TNLQELHLSDNKFTGSLPNLTSLTS), 295-314 (YTLDVSNNPLALSPVPSWIP), 316-340 (LNSLSTLRLEDIQLDGPVPTSLFSP), 342-365 (QLQTVSLKHNLINTTLDLGTNYSK), 367-387 (LDFVDLRDNFITGYKSPANNP), and 389-407 (NVMLADNQVCQDPANQLSG). Asn-246, Asn-267, and Asn-287 each carry an N-linked (GlcNAc...) asparagine glycan. N-linked (GlcNAc...) asparagine glycosylation is found at Asn-354 and Asn-362. Residues Asn-415, Asn-460, Asn-489, and Asn-514 are each glycosylated (N-linked (GlcNAc...) asparagine). A helical transmembrane segment spans residues 562–582 (VIIGVVVGVVVLLLLLALAGI). Topologically, residues 583–946 (YALRQKKRAQ…YTGVFPTPKP (364 aa)) are cytoplasmic. The Protein kinase domain occupies 634-908 (FSDANDVGGG…EVVQELESIL (275 aa)). ATP is bound by residues 640 to 648 (VGGGGYGQV) and Lys-662. Asp-758 functions as the Proton acceptor in the catalytic mechanism. The disordered stretch occupies residues 919–946 (SATYEEASGDPYGRDSFEYTGVFPTPKP).

It belongs to the protein kinase superfamily. Ser/Thr protein kinase family.

The protein resides in the membrane. The catalysed reaction is L-seryl-[protein] + ATP = O-phospho-L-seryl-[protein] + ADP + H(+). The enzyme catalyses L-threonyl-[protein] + ATP = O-phospho-L-threonyl-[protein] + ADP + H(+). In Arabidopsis thaliana (Mouse-ear cress), this protein is Probable leucine-rich repeat receptor-like protein kinase At5g49770.